Here is a 408-residue protein sequence, read N- to C-terminus: MAKVVDRFISYVKYSTTSKEGSETFPSTEGQLKFARLLVDELKELGLNNVHLDEYGYVMATVPSNVDHKVPTIGFIAHMDTSPDMSGTNVKPQIVENYNGKDIVLNKSKNIILSPDNFPELKKYTGKTLITTDGTTLLGADDKAGIAEIITAVEHLMNNPEYPHGEIKIAFTPDEEIGQGADKFRVDKFGADFAYTVDGGPIGELEYENFNAARAKITVNGVNVHPGTAKNKMKNSLLIANELINMLPPAEIPAHTEGYEGFFHLMSVTGSVEQTRLDFIIRDFYKNKFEERKNLMVKIADYLNVKYGENTITLNLKDQYYNMKEKIKEHIHIVYTARRAMEEVGVTPRVNPIRGGTDGARLSYMGLPTPNLFTGGHNFHGRYEYIPVFAMEKAVDVILKIIELYATK.

H78 contributes to the Zn(2+) binding site. D80 is an active-site residue. D141 lines the Zn(2+) pocket. E175 acts as the Proton acceptor in catalysis. Positions 176, 198, and 380 each coordinate Zn(2+).

This sequence belongs to the peptidase M20B family. It depends on Zn(2+) as a cofactor.

Its subcellular location is the cytoplasm. The catalysed reaction is Release of the N-terminal residue from a tripeptide.. Its function is as follows. Cleaves the N-terminal amino acid of tripeptides. The chain is Peptidase T from Halothermothrix orenii (strain H 168 / OCM 544 / DSM 9562).